A 352-amino-acid polypeptide reads, in one-letter code: S-adenosylmethionine:tRNA ribosyltransferase-isomerase (352 aa).

Belongs to the QueA family. As to quaternary structure, monomer.

The protein resides in the cytoplasm. It catalyses the reaction 7-aminomethyl-7-carbaguanosine(34) in tRNA + S-adenosyl-L-methionine = epoxyqueuosine(34) in tRNA + adenine + L-methionine + 2 H(+). The protein operates within tRNA modification; tRNA-queuosine biosynthesis. Functionally, transfers and isomerizes the ribose moiety from AdoMet to the 7-aminomethyl group of 7-deazaguanine (preQ1-tRNA) to give epoxyqueuosine (oQ-tRNA). The protein is S-adenosylmethionine:tRNA ribosyltransferase-isomerase of Solibacter usitatus (strain Ellin6076).